A 32-amino-acid polypeptide reads, in one-letter code: Delta-conotoxin-like MVID (32 aa).

3 cysteine pairs are disulfide-bonded: Cys-3–Cys-18, Cys-10–Cys-22, and Cys-17–Cys-27. 4-hydroxyproline is present on Pro-14.

This sequence belongs to the conotoxin O1 superfamily. In terms of tissue distribution, expressed by the venom duct.

Its subcellular location is the secreted. Delta-conotoxins bind to site 6 of voltage-gated sodium channels (Nav) and inhibit the inactivation process. The sequence is that of Delta-conotoxin-like MVID from Conus magus (Magical cone).